The sequence spans 894 residues: Alanine--tRNA ligase (894 aa).

The protein belongs to the class-II aminoacyl-tRNA synthetase family.

Its subcellular location is the cytoplasm. The enzyme catalyses tRNA(Ala) + L-alanine + ATP = L-alanyl-tRNA(Ala) + AMP + diphosphate. Functionally, catalyzes the attachment of alanine to tRNA(Ala) in a two-step reaction: alanine is first activated by ATP to form Ala-AMP and then transferred to the acceptor end of tRNA(Ala). Also edits incorrectly charged Ser-tRNA(Ala) and Gly-tRNA(Ala) via its editing domain. The chain is Alanine--tRNA ligase (alaS) from Leuconostoc citreum (strain KM20).